The following is a 333-amino-acid chain: Plasminogen (333 aa).

The 80-residue stretch at 4–83 (CMFGNGKGYR…LFDYCDVPQC (80 aa)) folds into the Kringle 5 domain. Disulfide bonds link cysteine 4–cysteine 83, cysteine 25–cysteine 66, cysteine 54–cysteine 78, cysteine 90–cysteine 208, cysteine 100–cysteine 108, cysteine 130–cysteine 146, cysteine 222–cysteine 289, cysteine 252–cysteine 268, and cysteine 279–cysteine 307. The Peptidase S1 domain maps to 104-331 (VVGGCVANPH…FVTWIEGIMR (228 aa)). Phosphoserine is present on serine 120. Residues histidine 145 and aspartate 188 each act as charge relay system in the active site. Catalysis depends on serine 283, which acts as the Charge relay system.

This sequence belongs to the peptidase S1 family. Plasminogen subfamily. In terms of assembly, interacts with CSPG4 and AMOT. Interacts (via the Kringle domains) with HRG; the interaction tethers PLG to the cell surface and enhances its activation. Interacts (via Kringle 4 domain) with ADA; the interaction stimulates PLG activation when in complex with DPP4. Angiostatin: Interacts with ATP5F1A; the interaction inhibits most of the angiogenic effects of angiostatin.

It is found in the secreted. The enzyme catalyses Preferential cleavage: Lys-|-Xaa &gt; Arg-|-Xaa, higher selectivity than trypsin. Converts fibrin into soluble products.. With respect to regulation, converted into plasmin by plasminogen activators, both plasminogen and its activator being bound to fibrin. Activated with urokinase and high concentrations of streptokinase. In terms of biological role, plasmin dissolves the fibrin of blood clots and acts as a proteolytic factor in a variety of other processes including embryonic development, tissue remodeling, tumor invasion, and inflammation. In ovulation, weakens the walls of the Graafian follicle. It activates the urokinase-type plasminogen activator, collagenases and several complement zymogens, such as C1, C4 and C5. Cleavage of fibronectin and laminin leads to cell detachment and apoptosis. Also cleaves fibrin, thrombospondin and von Willebrand factor. Its role in tissue remodeling and tumor invasion may be modulated by CSPG4. Binds to cells. This is Plasminogen (PLG) from Canis lupus familiaris (Dog).